Here is a 390-residue protein sequence, read N- to C-terminus: uncharacterized protein (390 aa).

The protein belongs to the arsA ATPase family.

This is an uncharacterized protein from Streptomyces coelicolor (strain ATCC BAA-471 / A3(2) / M145).